The chain runs to 478 residues: Protein nucleotidyltransferase YdiU (478 aa).

Glycine 84, glycine 86, arginine 87, lysine 107, aspartate 119, glycine 120, arginine 170, and arginine 177 together coordinate ATP. Catalysis depends on aspartate 246, which acts as the Proton acceptor. Mg(2+)-binding residues include asparagine 247 and aspartate 256. Aspartate 256 is an ATP binding site.

It belongs to the SELO family. Requires Mg(2+) as cofactor. Mn(2+) is required as a cofactor.

It carries out the reaction L-seryl-[protein] + ATP = 3-O-(5'-adenylyl)-L-seryl-[protein] + diphosphate. The enzyme catalyses L-threonyl-[protein] + ATP = 3-O-(5'-adenylyl)-L-threonyl-[protein] + diphosphate. The catalysed reaction is L-tyrosyl-[protein] + ATP = O-(5'-adenylyl)-L-tyrosyl-[protein] + diphosphate. It catalyses the reaction L-histidyl-[protein] + UTP = N(tele)-(5'-uridylyl)-L-histidyl-[protein] + diphosphate. It carries out the reaction L-seryl-[protein] + UTP = O-(5'-uridylyl)-L-seryl-[protein] + diphosphate. The enzyme catalyses L-tyrosyl-[protein] + UTP = O-(5'-uridylyl)-L-tyrosyl-[protein] + diphosphate. Its function is as follows. Nucleotidyltransferase involved in the post-translational modification of proteins. It can catalyze the addition of adenosine monophosphate (AMP) or uridine monophosphate (UMP) to a protein, resulting in modifications known as AMPylation and UMPylation. The chain is Protein nucleotidyltransferase YdiU from Escherichia coli (strain SE11).